The following is a 350-amino-acid chain: (RS)-norcoclaurine 6-O-methyltransferase (350 aa).

Residue Met-166 coordinates S-adenosyl-L-methionine. Residue Asp-169 coordinates substrate. S-adenosyl-L-methionine is bound by residues Thr-170, Gly-195, Asp-218, 238-239 (DM), and Lys-252. Substrate is bound by residues 253 to 257 (CILHD) and Asp-306. His-256 functions as the Proton acceptor in the catalytic mechanism.

This sequence belongs to the class I-like SAM-binding methyltransferase superfamily. Cation-independent O-methyltransferase family. COMT subfamily. As to quaternary structure, homodimer. Expressed in leaf primordia of rhizomes and root endodermis.

The catalysed reaction is (S)-norcoclaurine + S-adenosyl-L-methionine = (S)-coclaurine + S-adenosyl-L-homocysteine + H(+). The enzyme catalyses norcoclaurine + S-adenosyl-L-methionine = coclaurine + S-adenosyl-L-homocysteine + H(+). Its activity is regulated as follows. Inhibited by sanguinarine. Involved in the biosynthesis of coclaurine, a precursor of benzylisoquinoline alkaloids. Catalyzes the transfer of the S-methyl group of S-adenosyl-L-methionine (AdoMet) to the 6-hydroxyl group of norcoclaurine to form coclaurine. This chain is (RS)-norcoclaurine 6-O-methyltransferase, found in Thalictrum flavum subsp. glaucum (Yellow meadow rue).